The following is a 218-amino-acid chain: Adenylate kinase (218 aa).

Residue 10–15 (GAGKGT) coordinates ATP. Residues 30–59 (STGDIFREAIAKGTELGRKVQDIVNSGNLV) are NMP. Residues Thr31, Arg36, 57-59 (NLV), 85-88 (GYPR), and Gln92 each bind AMP. The interval 126 to 163 (TRRVCSKCGKVYNVITLPSKVEGICDDCGGTLIQRDDD) is LID. Residue Arg127 coordinates ATP. Residues Cys130 and Cys133 each coordinate Zn(2+). 136–137 (VY) contacts ATP. The Zn(2+) site is built by Cys150 and Cys153. AMP-binding residues include Arg160 and Arg171. Residue Lys199 participates in ATP binding.

This sequence belongs to the adenylate kinase family. In terms of assembly, monomer.

Its subcellular location is the cytoplasm. The enzyme catalyses AMP + ATP = 2 ADP. It participates in purine metabolism; AMP biosynthesis via salvage pathway; AMP from ADP: step 1/1. Catalyzes the reversible transfer of the terminal phosphate group between ATP and AMP. Plays an important role in cellular energy homeostasis and in adenine nucleotide metabolism. This Fervidobacterium nodosum (strain ATCC 35602 / DSM 5306 / Rt17-B1) protein is Adenylate kinase.